The sequence spans 1412 residues: Protein MODIFIER OF SNC1 1 (1412 aa).

6 disordered regions span residues 1 to 276 (MTSS…QSYP), 384 to 437 (GYGS…TQRP), 472 to 798 (QQMQ…KQKQ), 827 to 888 (NEGV…DESI), 909 to 1144 (DIKV…WNDG), and 1156 to 1412 (AEEM…GDRN). The segment covering 56-103 (SWGSKSSLNAWGTSSLSPRTESGPGSPSHLSNRPSSGGSVTRPSTADS) has biased composition (polar residues). Serine 72 carries the post-translational modification Phosphoserine. Residues 109 to 119 (SSSSVAWDSNS) are compositionally biased toward low complexity. Over residues 120–135 (RPSSASGVFPSNQPSV) the composition is skewed to polar residues. 2 stretches are compositionally biased toward basic and acidic residues: residues 197–207 (AEKDTSEKSTR) and 236–267 (ANDR…EGQL). Over residues 478-488 (RNERREIRNDA) the composition is skewed to basic and acidic residues. Composition is skewed to polar residues over residues 517–531 (KTRT…SSVV), 539–553 (QPRT…NKVS), 565–581 (SKNS…TNKN), and 610–639 (RIVN…TNTE). Basic and acidic residues predominate over residues 665–713 (DPKDNQRSTMRELARQRAQQRQKEEEERARDQRAKALAKLEELNRRSQI). The stretch at 667–717 (KDNQRSTMRELARQRAQQRQKEEEERARDQRAKALAKLEELNRRSQIYEEG) forms a coiled coil. 3 stretches are compositionally biased toward polar residues: residues 738–749 (GSHSSNATNSVE), 756–779 (KNTT…QQDN), and 829–847 (GVSS…SAES). Residues 850 to 862 (PKRKNNRNGKKKH) are compositionally biased toward basic residues. Residues 877–888 (VGKETKSGDESI) are compositionally biased toward basic and acidic residues. Serine 883 is subject to Phosphoserine. Composition is skewed to polar residues over residues 914 to 938 (GDSS…NWKS) and 983 to 1003 (QTTV…QTSS). Residues 1006-1023 (KRVEIERYVPKPIVKEMA) show a composition bias toward basic and acidic residues. The span at 1056-1070 (LQPSGSTAGKSGSPS) shows a compositional bias: polar residues. A compositionally biased stretch (basic residues) spans 1071–1084 (KSRHGNGRQGKHGR). The segment covering 1106–1137 (FVTSNQPIRGTVNYHSSKQTEQIAAKDQTTCN) has biased composition (polar residues). Basic and acidic residues-rich tracts occupy residues 1191-1202 (DPKKGNKRDFNK), 1222-1232 (KEGRVPGDHVW), and 1242-1251 (GGRESTRDKP). Composition is skewed to polar residues over residues 1266-1286 (GFTT…QNRS) and 1293-1307 (VEQN…NTGQ). Basic and acidic residues-rich tracts occupy residues 1338–1351 (SNRD…HYEY) and 1359–1369 (YDGERSREQSK). Low complexity predominate over residues 1384 to 1397 (QGQQRQGGYQQQRG). A compositionally biased stretch (gly residues) spans 1400-1412 (GRNGGHGFTGDRN).

Interacts with TCP14 and TCP15.

Its function is as follows. Involved in the regulation of the chromatin structure and DNA methylation at the SNC1 locus. Regulates the expression of SNC1 at chromatin level. This chain is Protein MODIFIER OF SNC1 1 (MOS1), found in Arabidopsis thaliana (Mouse-ear cress).